The chain runs to 117 residues: Virion membrane protein A21 (117 aa).

Residues 1–21 traverse the membrane as a helical; Signal-anchor for type III membrane protein segment; it reads MITLFLILCYFILIFNIIVPA. The Virion surface segment spans residues 22 to 117; that stretch reads ISEKMRRERA…RAYSDLFFTT (96 aa).

It belongs to the chordopoxvirinae A21 family. Envelope protein part of a stable entry-fusion complex (EFC) which is at least composed of proteins A16, A21, A28, G3, G9, H2, J5, and L5. Formation of the viral membrane is necessary for the assembly of the complex. Post-translationally, contains two intramolecular disulfide bonds. They are created by the viral disulfide bond formation pathway, a poxvirus-specific pathway that operates on the cytoplasmic side of the MV membranes.

It is found in the virion membrane. Its function is as follows. Envelope protein part of the entry-fusion complex responsible for the virus membrane fusion with host cell membrane during virus entry. This Vaccinia virus (strain Ankara) (VACV) protein is Virion membrane protein A21.